The chain runs to 88 residues: Large ribosomal subunit protein bL27 (88 aa).

The interval Met-1–Lys-24 is disordered.

The protein belongs to the bacterial ribosomal protein bL27 family.

The chain is Large ribosomal subunit protein bL27 from Prochlorococcus marinus (strain MIT 9313).